The chain runs to 416 residues: Tryptophan synthase beta chain (416 aa).

Lysine 109 bears the N6-(pyridoxal phosphate)lysine mark.

Belongs to the TrpB family. As to quaternary structure, tetramer of two alpha and two beta chains. Requires pyridoxal 5'-phosphate as cofactor.

It carries out the reaction (1S,2R)-1-C-(indol-3-yl)glycerol 3-phosphate + L-serine = D-glyceraldehyde 3-phosphate + L-tryptophan + H2O. It participates in amino-acid biosynthesis; L-tryptophan biosynthesis; L-tryptophan from chorismate: step 5/5. Functionally, the beta subunit is responsible for the synthesis of L-tryptophan from indole and L-serine. This chain is Tryptophan synthase beta chain, found in Mesorhizobium japonicum (strain LMG 29417 / CECT 9101 / MAFF 303099) (Mesorhizobium loti (strain MAFF 303099)).